Consider the following 849-residue polypeptide: Autoinducer 1 sensor kinase/phosphatase LuxN (849 aa).

7 consecutive transmembrane segments (helical) span residues 9 to 29, 41 to 61, 160 to 180, 196 to 216, 220 to 242, 251 to 275, and 283 to 301; these read IVYA…MWLF, VIFG…IAWI, SYFF…LVAM, IAGI…MTYF, FSLT…YALL, YIAY…AIFI, and WLIA…QLLY. The region spanning 468-683 is the Histidine kinase domain; sequence SIAHEMRNPL…EFHLYFPVVP (216 aa). Position 471 is a phosphohistidine; by autocatalysis (H471). Positions 722–835 constitute a Response regulatory domain; sequence TVLIVDDKEV…ALRHVLGNWL (114 aa). D771 is modified (4-aspartylphosphate).

The protein resides in the cell inner membrane. The enzyme catalyses ATP + protein L-histidine = ADP + protein N-phospho-L-histidine.. With respect to regulation, the phosphatase activity is constitutive and the kinase activity is regulated by the presence or absence of AI-1. At low cell density the kinase activity overrides the phosphatase activity. Its function is as follows. At low cell density, in the absence of AI-1 (autoinducer 1), LuxN has a kinase activity and autophosphorylates on His-471. The phosphoryl group is then transferred on Asp-771 of the response regulator domain. The phosphoryl group is transferred to LuxU, and ultimately to LuxO. At high cell density, in the presence of AI-1, the kinase activity is inactivated, and the response regulator domain has a phosphatase activity. LuxN phosphatase acts on itself. As LuxU could function to establish an equilibrium between the aspartyl-phosphate of LuxN and the aspartyl-phosphate of LuxO, LuxU transfers phosphate from LuxO to LuxN and finally phosphate is drained from the system. The polypeptide is Autoinducer 1 sensor kinase/phosphatase LuxN (luxN) (Vibrio campbellii (strain ATCC BAA-1116)).